Consider the following 440-residue polypeptide: Methylthioribose-1-phosphate isomerase (440 aa).

D285 serves as the catalytic Proton donor.

The protein belongs to the eIF-2B alpha/beta/delta subunits family. MtnA subfamily.

The protein localises to the cytoplasm. The protein resides in the nucleus. The enzyme catalyses 5-(methylsulfanyl)-alpha-D-ribose 1-phosphate = 5-(methylsulfanyl)-D-ribulose 1-phosphate. Its pathway is amino-acid biosynthesis; L-methionine biosynthesis via salvage pathway; L-methionine from S-methyl-5-thio-alpha-D-ribose 1-phosphate: step 1/6. Catalyzes the interconversion of methylthioribose-1-phosphate (MTR-1-P) into methylthioribulose-1-phosphate (MTRu-1-P). This chain is Methylthioribose-1-phosphate isomerase (mri1), found in Botryotinia fuckeliana (strain B05.10) (Noble rot fungus).